The sequence spans 307 residues: UDP-N-acetylenolpyruvoylglucosamine reductase (307 aa).

Positions 34 to 198 (TGGNADFYLS…LEAAFTLEPG (165 aa)) constitute an FAD-binding PCMH-type domain. The active site involves R177. The active-site Proton donor is the S227. Residue E297 is part of the active site.

The protein belongs to the MurB family. FAD serves as cofactor.

The protein resides in the cytoplasm. The catalysed reaction is UDP-N-acetyl-alpha-D-muramate + NADP(+) = UDP-N-acetyl-3-O-(1-carboxyvinyl)-alpha-D-glucosamine + NADPH + H(+). It participates in cell wall biogenesis; peptidoglycan biosynthesis. Functionally, cell wall formation. This Staphylococcus haemolyticus (strain JCSC1435) protein is UDP-N-acetylenolpyruvoylglucosamine reductase.